A 449-amino-acid polypeptide reads, in one-letter code: MLSSQTSSIFTVSRLNQTVRLLLEQEMGQVWISGEISNFTQPASGHWYFTLKDDTAQVRCAMFRNSNRRVTFRPQHGQQVLVRANITLYEPRGDYQIIAESMQPAGEGLLQQKYEQLKAKLQAEGLFDQQHKQQLPSPAHCVGVITSKTGAALHDILHVLKRRDPSLPVIIYPTAVQGDDAPGQIVRAIELANARGECDVLIVGRGGGSLEDLWSFNDERVARAIFASRIPVVSAVGHETDVTIADFVADLRAPTPSAAAEIVSRNQQELLRQIQSAQQRLGMAMDYYLANRSRRFTQIFHRLQQQHPQLRLARQQTALERLRQRMGFALEARIKQATQRQQRVSQRLSQQNPQPRIHRAQSRIQQLEYRLTENIRSRLSEQRERFGNAVTHLEAVSPLATLARGYTVSTTTDGKVLKKIKQVKAGDIMTTRLEDGWLESEVKSVTPGT.

Belongs to the XseA family. As to quaternary structure, heterooligomer composed of large and small subunits.

Its subcellular location is the cytoplasm. The catalysed reaction is Exonucleolytic cleavage in either 5'- to 3'- or 3'- to 5'-direction to yield nucleoside 5'-phosphates.. Its function is as follows. Bidirectionally degrades single-stranded DNA into large acid-insoluble oligonucleotides, which are then degraded further into small acid-soluble oligonucleotides. In Salmonella schwarzengrund (strain CVM19633), this protein is Exodeoxyribonuclease 7 large subunit.